Consider the following 415-residue polypeptide: Gamma-glutamyl phosphate reductase (415 aa).

This sequence belongs to the gamma-glutamyl phosphate reductase family.

The protein localises to the cytoplasm. It carries out the reaction L-glutamate 5-semialdehyde + phosphate + NADP(+) = L-glutamyl 5-phosphate + NADPH + H(+). Its pathway is amino-acid biosynthesis; L-proline biosynthesis; L-glutamate 5-semialdehyde from L-glutamate: step 2/2. Functionally, catalyzes the NADPH-dependent reduction of L-glutamate 5-phosphate into L-glutamate 5-semialdehyde and phosphate. The product spontaneously undergoes cyclization to form 1-pyrroline-5-carboxylate. The protein is Gamma-glutamyl phosphate reductase of Mycobacterium sp. (strain JLS).